The sequence spans 689 residues: Glycine--tRNA ligase beta subunit (689 aa).

The protein belongs to the class-II aminoacyl-tRNA synthetase family. In terms of assembly, tetramer of two alpha and two beta subunits.

The protein resides in the cytoplasm. It carries out the reaction tRNA(Gly) + glycine + ATP = glycyl-tRNA(Gly) + AMP + diphosphate. The sequence is that of Glycine--tRNA ligase beta subunit from Salmonella choleraesuis (strain SC-B67).